The following is a 281-amino-acid chain: MSAIKLDGNLYRDEIFEDLKGRVNSLREKGIVPGLATVLVGDDPASHAYVRMKHKDCEIVGVKSIRKDLPADVTQEELLAVIDDLNADPECTGYIVQLPLPKHLDENAVLERIDPAKDADGLHPVNLGKLVLNEPAPLPCTPNGAIHLLRRFGVELDGKKVVVIGRGVTVGRPIGLMLTRRSENSTVTLCHTGTRDLAAETREADVIVAAAGKAHMLTADMVKQGAAILDVGVSRVDGKLLGDVHPDVWDVAGAVSPNPGGVGPLTRAFLIRNVVERAERA.

Residues 165–167 (GRG), T192, and V233 each bind NADP(+).

Belongs to the tetrahydrofolate dehydrogenase/cyclohydrolase family. Homodimer.

It carries out the reaction (6R)-5,10-methylene-5,6,7,8-tetrahydrofolate + NADP(+) = (6R)-5,10-methenyltetrahydrofolate + NADPH. The catalysed reaction is (6R)-5,10-methenyltetrahydrofolate + H2O = (6R)-10-formyltetrahydrofolate + H(+). It functions in the pathway one-carbon metabolism; tetrahydrofolate interconversion. In terms of biological role, catalyzes the oxidation of 5,10-methylenetetrahydrofolate to 5,10-methenyltetrahydrofolate and then the hydrolysis of 5,10-methenyltetrahydrofolate to 10-formyltetrahydrofolate. The protein is Bifunctional protein FolD of Corynebacterium diphtheriae (strain ATCC 700971 / NCTC 13129 / Biotype gravis).